The primary structure comprises 67 residues: DNA-directed RNA polymerase subunit omega (67 aa).

This sequence belongs to the RNA polymerase subunit omega family. The RNAP catalytic core consists of 2 alpha, 1 beta, 1 beta' and 1 omega subunit. When a sigma factor is associated with the core the holoenzyme is formed, which can initiate transcription.

It carries out the reaction RNA(n) + a ribonucleoside 5'-triphosphate = RNA(n+1) + diphosphate. Functionally, promotes RNA polymerase assembly. Latches the N- and C-terminal regions of the beta' subunit thereby facilitating its interaction with the beta and alpha subunits. The chain is DNA-directed RNA polymerase subunit omega from Variovorax paradoxus (strain S110).